Here is a 528-residue protein sequence, read N- to C-terminus: Protein spinster homolog 1 (528 aa).

The disordered stretch occupies residues 1–38 (MAGSDTAPFLSQADDPDDGPAPGHPGLPGPMGNPKSGE). Ala-2 carries the N-acetylalanine modification. The next 12 helical transmembrane spans lie at 60–80 (LIVVVLCYINLLNYMDRFTVA), 98–118 (GLIQTVFISSYMVLAPVFGYL), 126–146 (YLMCGGIAFWSLVTLGSSFIP), 160–180 (VGVGEASYSTIAPTLIADLFV), 187–207 (MLSIFYFAIPVGSGLGYIAGS), 218–238 (WALRVTPGLGVLAVLLLFLVV), 278–298 (LGFTAVAFVTGSLALWAPAFL), 323–343 (LIFGLITCLTGVLGVGLGVEI), 357–377 (LVCAAGLLGSSPFLFLSLACA), 381–401 (IVATYIFIFIGETLLSMNWAI), 421–441 (FQIVLSHLLGDAGSPYLIGLI), and 465–485 (MLCAFVGALGGAAFLGTAMFI). Ser-518 carries the phosphoserine modification.

It belongs to the major facilitator superfamily. Spinster (TC 2.A.1.49) family. In terms of assembly, interacts with BCL2 and BCL2L1.

Its subcellular location is the lysosome membrane. It carries out the reaction a 1-acyl-sn-glycero-3-phosphocholine(out) + H(+)(out) = a 1-acyl-sn-glycero-3-phosphocholine(in) + H(+)(in). It catalyses the reaction 1-hexadecanoyl-sn-glycero-3-phosphocholine(out) + H(+)(out) = 1-hexadecanoyl-sn-glycero-3-phosphocholine(in) + H(+)(in). The enzyme catalyses 1-(9Z-octadecenoyl)-sn-glycero-3-phosphocholine(out) + H(+)(out) = 1-(9Z-octadecenoyl)-sn-glycero-3-phosphocholine(in) + H(+)(in). The catalysed reaction is 1-(5Z,8Z,11Z,14Z-eicosatetraenoyl)-sn-glycero-3-phosphocholine(out) + H(+)(out) = 1-(5Z,8Z,11Z,14Z-eicosatetraenoyl)-sn-glycero-3-phosphocholine(in) + H(+)(in). It carries out the reaction 1-(4Z,7Z,10Z,13Z,16Z,19Z-docosahexaenoyl)-sn-glycero-3-phosphocholine(out) + H(+)(out) = 1-(4Z,7Z,10Z,13Z,16Z,19Z-docosahexaenoyl)-sn-glycero-3-phosphocholine(in) + H(+)(in). It catalyses the reaction a 1-acyl-sn-glycero-3-phosphoethanolamine(out) + H(+)(out) = a 1-acyl-sn-glycero-3-phosphoethanolamine(in) + H(+)(in). The enzyme catalyses 1-(9Z-octadecenoyl)-sn-glycero-3-phosphoethanolamine(out) + H(+)(out) = 1-(9Z-octadecenoyl)-sn-glycero-3-phosphoethanolamine(in) + H(+)(in). The catalysed reaction is 1-acyl-sn-glycero-3-phospho-(1'-sn-glycerol)(out) + H(+)(out) = 1-acyl-sn-glycero-3-phospho-(1'-sn-glycerol)(in) + H(+)(in). It carries out the reaction 1-(9Z-octadecenoyl)-sn-glycero-3-phospho-(1'-sn-glycerol)(out) + H(+)(out) = 1-(9Z-octadecenoyl)-sn-glycero-3-phospho-(1'-sn-glycerol)(in) + H(+)(in). It catalyses the reaction a 1-O-(1Z-alkenyl)-sn-glycero-3-phosphocholine(out) + H(+)(out) = a 1-O-(1Z-alkenyl)-sn-glycero-3-phosphocholine(in) + H(+)(in). The enzyme catalyses 1-(1Z-hexadecenyl)-sn-glycero-3-phosphocholine(out) + H(+)(out) = 1-(1Z-hexadecenyl)-sn-glycero-3-phosphocholine(in) + H(+)(in). The catalysed reaction is a 1-O-(1Z-alkenyl)-sn-glycero-3-phosphoethanolamine(out) + H(+)(out) = a 1-O-(1Z-alkenyl)-sn-glycero-3-phosphoethanolamine(in) + H(+)(in). It carries out the reaction 1-O-(1Z-hexadecenyl)-sn-glycero-3-phosphoethanolamine(out) + H(+)(out) = 1-O-(1Z-hexadecenyl)-sn-glycero-3-phosphoethanolamine(in) + H(+)(in). Its function is as follows. Plays a critical role in the phospholipid salvage pathway from lysosomes to the cytosol. Mediates the rate-limiting, proton-dependent, lysosomal efflux of lysophospholipids, which can then be reacylated by acyltransferases in the endoplasmic reticulum to form phospholipids. Selective for zwitterionic headgroups such as lysophosphatidylcholine (LPC) and lysophosphatidylethanolamine (LPE), can also transport lysophosphatidylglycerol (LPG), but not other anionic lysophospholipids, sphingosine, nor sphingomyelin. Transports lysophospholipids with saturated, monounsaturated, and polyunsaturated fatty acids, such as 1-hexadecanoyl-sn-glycero-3-phosphocholine, 1-(9Z-octadecenoyl)-sn-glycero-3-phosphocholine and 1-(4Z,7Z,10Z,13Z,16Z,19Z-docosahexaenoyl)-sn-glycero-3-phosphocholine, respectively. Can also transport lysoplasmalogen (LPC with a fatty alcohol) such as 1-(1Z-hexadecenyl)-sn-glycero-3-phosphocholine. Essential player in lysosomal homeostasis. Crucial for cell survival under conditions of nutrient limitation. May be involved in necrotic or autophagic cell death. The protein is Protein spinster homolog 1 (Spns1) of Rattus norvegicus (Rat).